Consider the following 447-residue polypeptide: Trigger factor (447 aa).

The PPIase FKBP-type domain occupies 159 to 244 (GDMLLMQVES…VREIKEEKLP (86 aa)).

This sequence belongs to the FKBP-type PPIase family. Tig subfamily.

The protein localises to the cytoplasm. It carries out the reaction [protein]-peptidylproline (omega=180) = [protein]-peptidylproline (omega=0). Involved in protein export. Acts as a chaperone by maintaining the newly synthesized protein in an open conformation. Functions as a peptidyl-prolyl cis-trans isomerase. This is Trigger factor from Dehalococcoides mccartyi (strain CBDB1).